Consider the following 360-residue polypeptide: MKSSIVAKLEALQERREEVEVLLGDPGVISDQIRFRALSKEYAQLSDVTRCFQHWWQVQEDIHTAEHLLQDPEMRDMAQEELLASGASLEQLEQQLQVLLLPRDPDDERGCFLEVRAGTGGDEAALFAGDLFRMYSRYAETRRWKVEIVSASYGEHGGFKEVIAKVSHEGAYGLLKFESGGHRVQRVPETESQGRIHTSACTVAVMPEIPEAELPEINAGDLRIDTFRSSGAGGQHVNTTDSAIRITHLPTGLVVECQDERSQHKNKAKALAVLGARLRAAEVQRRQQEESSTRRNLLGSGDRSDRIRTYNFPQGRVTDHRIGLTLYRLDEVIEGKLDMLIQPIMQEYQADQLAALSETP.

N5-methylglutamine is present on Gln235. Basic and acidic residues predominate over residues 284–293; it reads QRRQQEESST. The tract at residues 284–311 is disordered; sequence QRRQQEESSTRRNLLGSGDRSDRIRTYN.

It belongs to the prokaryotic/mitochondrial release factor family. Post-translationally, methylated by PrmC. Methylation increases the termination efficiency of RF1.

The protein localises to the cytoplasm. Functionally, peptide chain release factor 1 directs the termination of translation in response to the peptide chain termination codons UAG and UAA. The sequence is that of Peptide chain release factor 1 from Sodalis glossinidius (strain morsitans).